The sequence spans 742 residues: Clamp-binding protein CrfC (742 aa).

The interval 41–45 (QLALP) is clamp-binding consensus. The Dynamin-type G domain maps to 66–402 (SRLEMVLAIV…LWEDSLFAQP (337 aa)). The interval 76 to 83 (GTMKAGKS) is G1 motif. Positions 102–104 (MTA) are G2 motif. Residues 236–239 (DTPG) are G3 motif. The G4 motif stretch occupies residues 297–300 (NKFD). Residues 331 to 334 (FPVS) are G5 motif. A coiled-coil region spans residues 440–472 (RAHGLNVACEQLRQNIHQVEESLQLLQLNQAQV).

The protein belongs to the TRAFAC class dynamin-like GTPase superfamily. Dynamin/Fzo/YdjA family. As to quaternary structure, forms homooligomers. Binds to the beta sliding clamp processivity factor (DnaN) in the presence and absence of DNA, may bind to the clamp itself as homodimers or trimers. Homooligomers may be able to bind more than 1 clamp complex.

The protein resides in the cytoplasm. Important for the colocalization of sister nascent DNA strands after replication fork passage during DNA replication, and for positioning and subsequent partitioning of sister chromosomes. Does not have GTPase activity on its own. The protein is Clamp-binding protein CrfC (crfC) of Escherichia coli.